We begin with the raw amino-acid sequence, 150 residues long: 3-dehydroquinate dehydratase (150 aa).

The active-site Proton acceptor is Tyr-26. Residues Asn-77, His-83, and Asp-90 each contribute to the substrate site. Catalysis depends on His-103, which acts as the Proton donor. Substrate contacts are provided by residues 104-105 (LS) and Arg-114.

It belongs to the type-II 3-dehydroquinase family. Homododecamer.

The catalysed reaction is 3-dehydroquinate = 3-dehydroshikimate + H2O. The protein operates within metabolic intermediate biosynthesis; chorismate biosynthesis; chorismate from D-erythrose 4-phosphate and phosphoenolpyruvate: step 3/7. Its function is as follows. Catalyzes a trans-dehydration via an enolate intermediate. The chain is 3-dehydroquinate dehydratase from Photorhabdus laumondii subsp. laumondii (strain DSM 15139 / CIP 105565 / TT01) (Photorhabdus luminescens subsp. laumondii).